A 383-amino-acid polypeptide reads, in one-letter code: Dimethylsulfoniopropionate lyase 3 (383 aa).

This sequence belongs to the aspartate/glutamate racemases family. ALMA1 subfamily. As to quaternary structure, homotetramer.

The enzyme catalyses S,S-dimethyl-beta-propiothetin = acrylate + dimethyl sulfide + H(+). Functionally, mediates cleavage of dimethylsulfoniopropionate (DMSP) into dimethyl sulfide (DMS) and acrylate. DMS is the principal form by which sulfur is transported from oceans to the atmosphere and is a key component of the ocean sulfur cycle. The sequence is that of Dimethylsulfoniopropionate lyase 3 from Emiliania huxleyi (strain CCMP1516).